Consider the following 130-residue polypeptide: Ribonuclease P protein component 2 (130 aa).

This sequence belongs to the eukaryotic/archaeal RNase P protein component 2 family. Consists of a catalytic RNA component and at least 4-5 protein subunits.

It is found in the cytoplasm. The enzyme catalyses Endonucleolytic cleavage of RNA, removing 5'-extranucleotides from tRNA precursor.. In terms of biological role, part of ribonuclease P, a protein complex that generates mature tRNA molecules by cleaving their 5'-ends. The polypeptide is Ribonuclease P protein component 2 (Methanococcus vannielii (strain ATCC 35089 / DSM 1224 / JCM 13029 / OCM 148 / SB)).